Here is a 329-residue protein sequence, read N- to C-terminus: Malate dehydrogenase (329 aa).

Residue 11–17 coordinates NAD(+); that stretch reads GAAGQIG. Residues R92 and R98 each contribute to the substrate site. NAD(+) contacts are provided by residues N105, Q112, and 129–131; that span reads VGN. Positions 131 and 165 each coordinate substrate. H190 serves as the catalytic Proton acceptor.

It belongs to the LDH/MDH superfamily. MDH type 2 family.

It carries out the reaction (S)-malate + NAD(+) = oxaloacetate + NADH + H(+). Its function is as follows. Catalyzes the reversible oxidation of malate to oxaloacetate. The chain is Malate dehydrogenase from Laribacter hongkongensis (strain HLHK9).